The following is a 497-amino-acid chain: Serine hydroxymethyltransferase (497 aa).

(6S)-5,6,7,8-tetrahydrofolate is bound by residues L176 and 180–182 (GHL). K289 carries the post-translational modification N6-(pyridoxal phosphate)lysine. Residue E306 participates in (6S)-5,6,7,8-tetrahydrofolate binding.

The protein belongs to the SHMT family. As to quaternary structure, homodimer. Requires pyridoxal 5'-phosphate as cofactor.

It is found in the cytoplasm. It carries out the reaction (6R)-5,10-methylene-5,6,7,8-tetrahydrofolate + glycine + H2O = (6S)-5,6,7,8-tetrahydrofolate + L-serine. The protein operates within one-carbon metabolism; tetrahydrofolate interconversion. It participates in amino-acid biosynthesis; glycine biosynthesis; glycine from L-serine: step 1/1. In terms of biological role, catalyzes the reversible interconversion of serine and glycine with tetrahydrofolate (THF) serving as the one-carbon carrier. This reaction serves as the major source of one-carbon groups required for the biosynthesis of purines, thymidylate, methionine, and other important biomolecules. Also exhibits THF-independent aldolase activity toward beta-hydroxyamino acids, producing glycine and aldehydes, via a retro-aldol mechanism. The sequence is that of Serine hydroxymethyltransferase from Chlamydia pneumoniae (Chlamydophila pneumoniae).